Here is a 187-residue protein sequence, read N- to C-terminus: Acireductone dioxygenase (187 aa).

Residues His87, His89, Glu93, and His136 each contribute to the Fe(2+) site. Residues His87, His89, Glu93, and His136 each contribute to the Ni(2+) site.

It belongs to the acireductone dioxygenase (ARD) family. It depends on Fe(2+) as a cofactor. Ni(2+) serves as cofactor.

It is found in the cytoplasm. The protein localises to the nucleus. It carries out the reaction 1,2-dihydroxy-5-(methylsulfanyl)pent-1-en-3-one + O2 = 4-methylsulfanyl-2-oxobutanoate + formate + 2 H(+). The catalysed reaction is 1,2-dihydroxy-5-(methylsulfanyl)pent-1-en-3-one + O2 = 3-(methylsulfanyl)propanoate + CO + formate + 2 H(+). The protein operates within amino-acid biosynthesis; L-methionine biosynthesis via salvage pathway; L-methionine from S-methyl-5-thio-alpha-D-ribose 1-phosphate: step 5/6. Its function is as follows. Catalyzes 2 different reactions between oxygen and the acireductone 1,2-dihydroxy-3-keto-5-methylthiopentene (DHK-MTPene) depending upon the metal bound in the active site. Fe-containing acireductone dioxygenase (Fe-ARD) produces formate and 2-keto-4-methylthiobutyrate (KMTB), the alpha-ketoacid precursor of methionine in the methionine recycle pathway. Ni-containing acireductone dioxygenase (Ni-ARD) produces methylthiopropionate, carbon monoxide and formate, and does not lie on the methionine recycle pathway. The chain is Acireductone dioxygenase from Cryptococcus neoformans var. neoformans serotype D (strain JEC21 / ATCC MYA-565) (Filobasidiella neoformans).